Consider the following 436-residue polypeptide: Serine carboxypeptidase-like 15 (436 aa).

Positions 1-24 (MASWIFKLLLLLQCVLVLIQHADS) are cleaved as a signal peptide. Disulfide bonds link Cys83–Cys326, Cys247–Cys261, and Cys285–Cys292. An N-linked (GlcNAc...) asparagine glycan is attached at Asn104. The active site involves Ser179. N-linked (GlcNAc...) asparagine glycans are attached at residues Asn306 and Asn345. Residue Asp361 is part of the active site. N-linked (GlcNAc...) asparagine glycosylation occurs at Asn377. His414 is a catalytic residue.

This sequence belongs to the peptidase S10 family. In terms of tissue distribution, expressed in seedlings and roots.

It is found in the secreted. Functionally, probable carboxypeptidase. The protein is Serine carboxypeptidase-like 15 (SCPL15) of Arabidopsis thaliana (Mouse-ear cress).